The sequence spans 248 residues: Endonuclease V (248 aa).

Aspartate 54 and aspartate 118 together coordinate Mg(2+).

It belongs to the endonuclease V family. Mg(2+) is required as a cofactor.

The protein localises to the cytoplasm. It catalyses the reaction Endonucleolytic cleavage at apurinic or apyrimidinic sites to products with a 5'-phosphate.. In terms of biological role, DNA repair enzyme involved in the repair of deaminated bases. Selectively cleaves double-stranded DNA at the second phosphodiester bond 3' to a deoxyinosine leaving behind the intact lesion on the nicked DNA. The sequence is that of Endonuclease V from Natronomonas pharaonis (strain ATCC 35678 / DSM 2160 / CIP 103997 / JCM 8858 / NBRC 14720 / NCIMB 2260 / Gabara) (Halobacterium pharaonis).